The primary structure comprises 574 residues: Choline transporter-like protein ctl1 (574 aa).

N-linked (GlcNAc...) asparagine glycans are attached at residues asparagine 40 and asparagine 101. 8 consecutive transmembrane segments (helical) span residues 144–164 (WGLT…LMVW), 189–209 (KDAI…VAIP), 211–231 (FLYF…VYLL), 246–266 (LMLL…YYVW), 291–311 (QITL…FIWV), 336–356 (WVLA…FHAL), 396–416 (YGLC…LHFL), and 434–456 (TSAS…VPYM). The N-linked (GlcNAc...) asparagine glycan is linked to asparagine 457. 2 consecutive transmembrane segments (helical) span residues 485–505 (LLAA…NYSI) and 511–531 (FYGY…IGAI). N-linked (GlcNAc...) asparagine glycosylation is present at asparagine 558.

The protein belongs to the CTL (choline transporter-like) family. As to quaternary structure, interacts with atg9.

Its subcellular location is the endoplasmic reticulum membrane. The protein resides in the preautophagosomal structure membrane. Its function is as follows. Required for the normal organization of the preautophagosomal structure (PAS) and for the correct subcellular location of atg9. This Schizosaccharomyces pombe (strain 972 / ATCC 24843) (Fission yeast) protein is Choline transporter-like protein ctl1 (ctl1).